The chain runs to 376 residues: Hydroxylysine kinase (376 aa).

The active-site Proton acceptor is Asp-229.

It belongs to the aminoglycoside phosphotransferase family.

It is found in the cytoplasm. It catalyses the reaction (5R)-5-hydroxy-L-lysine + GTP = (5R)-5-phosphooxy-L-lysine + GDP + H(+). In terms of biological role, catalyzes the GTP-dependent phosphorylation of 5-hydroxy-L-lysine. The chain is Hydroxylysine kinase (HYKK) from Bos taurus (Bovine).